The following is a 317-amino-acid chain: Tetraspanin-15 (317 aa).

A disordered region spans residues 1–43 (MADNAQVVPVEEPAATATATATATATTEPEAKSSDQMESQSDN). At 1–60 (MADNAQVVPVEEPAATATATATATATTEPEAKSSDQMESQSDNKPPMGTLMALVNILAAG) the chain is on the cytoplasmic side. A compositionally biased stretch (low complexity) spans 7–28 (VVPVEEPAATATATATATATTE). Residues 61–81 (VLPIFTFVLSLTLLGYAVWLL) traverse the membrane as a helical segment. Over 82–96 (YMRSYDCEDILGLPR) the chain is Extracellular. The helical transmembrane segment at 97 to 117 (VQTLASVGLLAVFVVSNAALF) threads the bilayer. Over 118-126 (LRRKFPMPA) the chain is Cytoplasmic. A helical membrane pass occupies residues 127–147 (LVVMVVVLLLMLFIGLAYAGV). At 148 to 287 (NEMQSRRFPA…IRSVRRKWWQ (140 aa)) the chain is on the extracellular side. Asn-224 is a glycosylation site (N-linked (GlcNAc...) asparagine). A helical transmembrane segment spans residues 288–308 (LGIFLIVISILLLMSHLLIFL). Topologically, residues 309 to 317 (ATFWERFKG) are cytoplasmic.

It belongs to the tetraspanin (TM4SF) family.

The protein localises to the membrane. Its function is as follows. May be involved in the regulation of cell differentiation. This is Tetraspanin-15 (TET15) from Arabidopsis thaliana (Mouse-ear cress).